We begin with the raw amino-acid sequence, 39 residues long: Photosystem II reaction center protein Y (39 aa).

The chain crosses the membrane as a helical span at residues 4 to 24 (RVIVVVSPLLIAATWAAINIG).

This sequence belongs to the PsbY family. As to quaternary structure, PSII is composed of 1 copy each of membrane proteins PsbA, PsbB, PsbC, PsbD, PsbE, PsbF, PsbH, PsbI, PsbJ, PsbK, PsbL, PsbM, PsbT, PsbX, PsbY, PsbZ, Psb30/Ycf12, peripheral proteins PsbO, CyanoQ (PsbQ), PsbU, PsbV and a large number of cofactors. It forms dimeric complexes.

It is found in the cellular thylakoid membrane. Its function is as follows. Loosely associated component of the core of photosystem II (PSII), it is not always seen in crystals. PSII is a light-driven water plastoquinone oxidoreductase, using light energy to abstract electrons from H(2)O, generating a proton gradient subsequently used for ATP formation. The protein is Photosystem II reaction center protein Y of Synechocystis sp. (strain ATCC 27184 / PCC 6803 / Kazusa).